The following is a 372-amino-acid chain: Aminomethyltransferase (372 aa).

Belongs to the GcvT family. As to quaternary structure, the glycine cleavage system is composed of four proteins: P, T, L and H.

It carries out the reaction N(6)-[(R)-S(8)-aminomethyldihydrolipoyl]-L-lysyl-[protein] + (6S)-5,6,7,8-tetrahydrofolate = N(6)-[(R)-dihydrolipoyl]-L-lysyl-[protein] + (6R)-5,10-methylene-5,6,7,8-tetrahydrofolate + NH4(+). Its function is as follows. The glycine cleavage system catalyzes the degradation of glycine. This is Aminomethyltransferase from Paraburkholderia phymatum (strain DSM 17167 / CIP 108236 / LMG 21445 / STM815) (Burkholderia phymatum).